We begin with the raw amino-acid sequence, 508 residues long: Photosystem II CP47 reaction center protein (508 aa).

The next 6 helical transmembrane spans lie at 21-36, 101-115, 140-156, 203-218, 237-252, and 457-472; these read AVHL…WAGS, IVLS…IWHW, GIHL…FGAF, IAAG…FHLS, VLSS…AFVV, and CFAL…HGSR.

It belongs to the PsbB/PsbC family. PsbB subfamily. As to quaternary structure, PSII is composed of 1 copy each of membrane proteins PsbA, PsbB, PsbC, PsbD, PsbE, PsbF, PsbH, PsbI, PsbJ, PsbK, PsbL, PsbM, PsbT, PsbX, PsbY, PsbZ, Psb30/Ycf12, at least 3 peripheral proteins of the oxygen-evolving complex and a large number of cofactors. It forms dimeric complexes. Requires Binds multiple chlorophylls. PSII binds additional chlorophylls, carotenoids and specific lipids. as cofactor.

Its subcellular location is the plastid. It localises to the chloroplast thylakoid membrane. Its function is as follows. One of the components of the core complex of photosystem II (PSII). It binds chlorophyll and helps catalyze the primary light-induced photochemical processes of PSII. PSII is a light-driven water:plastoquinone oxidoreductase, using light energy to abstract electrons from H(2)O, generating O(2) and a proton gradient subsequently used for ATP formation. The protein is Photosystem II CP47 reaction center protein of Zygnema circumcarinatum (Green alga).